Reading from the N-terminus, the 99-residue chain is Small ribosomal subunit protein bS20 (99 aa).

It belongs to the bacterial ribosomal protein bS20 family.

In terms of biological role, binds directly to 16S ribosomal RNA. The protein is Small ribosomal subunit protein bS20 of Synechococcus sp. (strain CC9311).